The following is a 141-amino-acid chain: uncharacterized protein (141 aa).

The segment at 1–101 (FRGRAPRPLV…PDPGRSRRAT (101 aa)) is disordered. The segment covering 27 to 70 (QVRDCGREGDLRAGKAADRRLPRARETCSRFGEGVRQKDVHKGP) has biased composition (basic and acidic residues).

This is an uncharacterized protein from Dhori virus (strain Indian/1313/61) (Dho).